The primary structure comprises 103 residues: Small ribosomal subunit protein uS10 (103 aa).

This sequence belongs to the universal ribosomal protein uS10 family. As to quaternary structure, part of the 30S ribosomal subunit.

Functionally, involved in the binding of tRNA to the ribosomes. The polypeptide is Small ribosomal subunit protein uS10 (Novosphingobium aromaticivorans (strain ATCC 700278 / DSM 12444 / CCUG 56034 / CIP 105152 / NBRC 16084 / F199)).